Consider the following 148-residue polypeptide: D-aminoacyl-tRNA deacylase (148 aa).

Positions 137–138 (GP) match the Gly-cisPro motif, important for rejection of L-amino acids motif.

The protein belongs to the DTD family. In terms of assembly, homodimer.

Its subcellular location is the cytoplasm. The enzyme catalyses glycyl-tRNA(Ala) + H2O = tRNA(Ala) + glycine + H(+). It catalyses the reaction a D-aminoacyl-tRNA + H2O = a tRNA + a D-alpha-amino acid + H(+). An aminoacyl-tRNA editing enzyme that deacylates mischarged D-aminoacyl-tRNAs. Also deacylates mischarged glycyl-tRNA(Ala), protecting cells against glycine mischarging by AlaRS. Acts via tRNA-based rather than protein-based catalysis; rejects L-amino acids rather than detecting D-amino acids in the active site. By recycling D-aminoacyl-tRNA to D-amino acids and free tRNA molecules, this enzyme counteracts the toxicity associated with the formation of D-aminoacyl-tRNA entities in vivo and helps enforce protein L-homochirality. This Finegoldia magna (strain ATCC 29328 / DSM 20472 / WAL 2508) (Peptostreptococcus magnus) protein is D-aminoacyl-tRNA deacylase.